The chain runs to 852 residues: Protein SEY1 (852 aa).

At 1 to 738 (MNGHFAAIGN…KRSAIGGITQ (738 aa)) the chain is on the cytoplasmic side. One can recognise a GB1/RHD3-type G domain in the interval 47–294 (GFNYHLISVF…IPADGLSVYA (248 aa)). Residue 57–64 (GSQSTGKS) participates in GTP binding. A coiled-coil region spans residues 475–500 (QYKLFEKELDEVSARLRKEEMRRLAI). A helical membrane pass occupies residues 739–759 (VPLYFYVILLILGWNEILMVL). Over 760–762 (RNP) the chain is Lumenal. Residues 763-783 (FLILLILVMGGGTYIAYSLNL) traverse the membrane as a helical segment. Over 784-852 (LGPMMQMSNA…AQDISDDDDI (69 aa)) the chain is Cytoplasmic.

It belongs to the TRAFAC class dynamin-like GTPase superfamily. GB1/RHD3 GTPase family. RHD3 subfamily.

The protein resides in the endoplasmic reticulum membrane. Its function is as follows. Cooperates with the reticulon proteins and tubule-shaping DP1 family proteins to generate and maintain the structure of the tubular endoplasmic reticulum network. Has GTPase activity, which is required for its function in ER organization. This chain is Protein SEY1, found in Podospora anserina (strain S / ATCC MYA-4624 / DSM 980 / FGSC 10383) (Pleurage anserina).